Reading from the N-terminus, the 1723-residue chain is Homeobox protein 5 (1723 aa).

The segment covering 36-50 (QLQQPQHQPQHYQQQ) has biased composition (low complexity). 9 disordered regions span residues 36 to 425 (QLQQ…APGT), 440 to 522 (SSSP…QLQQ), 543 to 756 (ENIT…PPLT), 878 to 978 (GTIV…TGSL), 1080 to 1214 (IFNN…SENN), 1226 to 1264 (VSLG…NQQQ), 1345 to 1399 (IVNN…TQTS), 1456 to 1498 (QQQQ…STTT), and 1513 to 1547 (HNQQ…SRRK). Residues 51-72 (DSFVSPNLDNNNPQIHVQSNNY) are compositionally biased toward polar residues. Composition is skewed to low complexity over residues 73 to 107 (NQNG…NNSS) and 114 to 212 (NNSS…NNNN). Composition is skewed to polar residues over residues 223–237 (SQPT…QHNP) and 244–257 (GQHN…MVMD). 2 stretches are compositionally biased toward low complexity: residues 258-284 (NNNN…NSNS) and 291-350 (NNNN…NNNN). A coiled-coil region spans residues 300 to 351 (YNNNNNNNNNNNSNSNNNNNNNNNNNNNNNNNNNNNNNNNNNNNSNNNNNNQ). Residues 351–369 (QFSQSYDSTLGNNRFSSMM) are compositionally biased toward polar residues. 2 stretches are compositionally biased toward low complexity: residues 371–421 (QPIQ…LIGS) and 440–465 (SSSP…LSSS). Over residues 483 to 510 (MSSITNTNLKSTQASTLKESKRSNSSPN) the composition is skewed to polar residues. 3 stretches are compositionally biased toward low complexity: residues 511-522 (LKKQMQLQQLQQ), 544-571 (NITN…ITNN), and 581-593 (NSNN…DSIN). Over residues 632–655 (HISTTQQSPSLNGSTGGSMLTPTM) the composition is skewed to polar residues. Residues 660-669 (LSGGGSGGGF) are compositionally biased toward gly residues. Positions 673–685 (ISPTGTTSNKDLQ) are enriched in polar residues. 3 stretches are compositionally biased toward low complexity: residues 686–699 (SSPS…SMSM), 710–727 (SMSS…SNGL), and 734–745 (SNNMNSSGGIPT). The segment covering 746 to 755 (PSTPTSPPPL) has biased composition (pro residues). Low complexity predominate over residues 882-928 (NPTNVNNNNINNNNNNNNNNNNNNNNNNNNNNNNNNNNTTTTTTTTT). Residues 929–945 (SANTVQSGTTSNSNLVF) are compositionally biased toward polar residues. Low complexity-rich tracts occupy residues 946–977 (QQTS…STGS) and 1082–1146 (NNNN…SINS). Polar residues-rich tracts occupy residues 1147–1159 (PRPS…NSSG) and 1176–1187 (DISTGLMASSDQ). Residues 1193-1270 (QQQQHQQLVN…NQQQILHQQL (78 aa)) adopt a coiled-coil conformation. The span at 1194–1214 (QQQHQQLVNNNNNNMNNSENN) shows a compositional bias: low complexity. Over residues 1226–1242 (VSLGSLPTNTPSSMEIE) the composition is skewed to polar residues. Low complexity-rich tracts occupy residues 1243-1264 (QQQQ…NQQQ), 1347-1384 (NNQN…TNTP), 1456-1480 (QQQQ…RSSP), 1487-1498 (SNTNTTTTSTTT), and 1518-1528 (SPISPRSPRSP). Residues 1431–1464 (VLQQQQQQQQQQQQQQQQQQQQQQQQQQQQQQET) are a coiled coil. Residues 1529-1543 (HGTSGDYNDGSQSPS) are compositionally biased toward polar residues. The homeobox DNA-binding region spans 1543–1607 (SSRRKNRFTD…NKRARSRPSP (65 aa)). In terms of domain architecture, EF-hand spans 1553–1588 (FQIKRMNDCFENLDKNNNGKFTSEEICQIATELGLT). Disordered stretches follow at residues 1598 to 1625 (NKRA…GNNS) and 1661 to 1723 (LHQQ…TINE). Low complexity predominate over residues 1612-1625 (TNPLTSSTNNGNNS). Residues 1632-1702 (LQQQHLQQVQ…NNNNNNNNNN (71 aa)) are a coiled coil. Residues 1665–1675 (SANTTPQLNSM) show a composition bias toward polar residues. Low complexity predominate over residues 1676-1723 (NPNSINYNNNNNNNNNNNNNNNNNNNNNNNNNNNNNNIINNNITTINE).

The protein localises to the nucleus. In terms of biological role, putative transcription factor. The chain is Homeobox protein 5 (hbx5-1) from Dictyostelium discoideum (Social amoeba).